Reading from the N-terminus, the 1038-residue chain is Type I restriction enzyme EcoR124I/EcoR124II endonuclease subunit (1038 aa).

Residues 31 to 249 form a nuclease domain region; it reads QSESDLEREL…LKDFTATCFQ (219 aa). Positions 250–469 are motor 1 domain; the sequence is KHTLLNVLVN…SYVITDAIRD (220 aa). The Helicase ATP-binding domain occupies 294-439; the sequence is KNWSKPESGG…YQFGFTGTPI (146 aa). 307 to 314 contacts ATP; that stretch reads HTTGSGKT. The short motif at 408-411 is the DEAH box element; sequence DECH. Positions 470 to 702 are motor 2 domain; the sequence is EKVLKFKVDY…YDATKTFGNI (233 aa). Residues 720-732 form a motor 2-helicase linker region; the sequence is GDKNTKNVVLEKS. The interval 732-860 is helicase domain; that stretch reads SYTEYMEGFT…NDIRDWQRRE (129 aa). A helicase-CTD linker region spans residues 859 to 886; it reads REKEAEKKEKSTTDWDDVVFEVDLLKSQ. The C-terminal domain stretch occupies residues 886-1038; it reads QEINLDYILG…EKFKGVGGKI (153 aa).

It belongs to the HsdR family. A monomer in solution. The type I restriction/modification system is composed of three polypeptides R, M and S; the restriction enzyme has stoichiometry R(2)M(2)S(1) while the methyltransferase is M(2)S(1). There is an equilibrium between R(2)M(2)S(1) and R(1)M(2)S(1); the latter is methylation and translocation proficient but restriction deficient. In terms of assembly, (Microbial infection) Holoenenzyme interacts with Escherichia phage T7 protein Ocr; this interaction leads to the inhibition of the restriction activity, but may still allow methylation and translocation.

The enzyme catalyses Endonucleolytic cleavage of DNA to give random double-stranded fragments with terminal 5'-phosphates, ATP is simultaneously hydrolyzed.. In terms of biological role, the restriction (R) subunit of a type I restriction enzyme that recognizes 5'-GAAN(6)RTCG-3' (for EcoR124I) and 5'-GAAN(7)RTCG-3' (for EcoR124II) and cleaves a random distance away. Subunit R is required for both nuclease and ATPase activities, but not for modification. After locating an unmethylated recognition site, the enzyme complex serves as a molecular motor that translocates DNA in an ATP-dependent manner until a collision occurs that triggers cleavage. The enzyme undergoes major structural changes to bring the motor domains into contact with DNA, allowing DNA translocation. This prevents DNA access to the catalytic domains of both the R and M subunits, preventing both restriction and methylation. The R(1)M(2)S(1) complex translocates an average of 555 bp/second on nicked DNA; the R(2)M(2)S(1) complex translocates at double that speed. The 2 R subunit motors are independent and track along the helical pitch of the DNA, inducing positive supercoiling ahead of themselves. This Escherichia coli protein is Type I restriction enzyme EcoR124I/EcoR124II endonuclease subunit.